The sequence spans 220 residues: MGAPLAAALGALHYLALFLQLGGATRPAGHAPWDNHVSGHALFTETPHDMTARTGEDVEMACSFRGSGSPSYSLEIQWWYLRSHRDWTDKQTWASNQLKASQQEDSGKDATKISVVKVVGSNISHKLRLSRVKPTDEGTYECRVIDFSDGGRGVPRVLCLLIPLPAPPRAPRPRGQPPGEEPGRGPTLLFLIILPGTGSGTPREAEPHQPHAGGCPARQS.

The N-terminal stretch at 1–24 is a signal peptide; sequence MGAPLAAALGALHYLALFLQLGGA. An Ig-like domain is found at 41-158; that stretch reads ALFTETPHDM…DGGRGVPRVL (118 aa). Cysteine 62 and cysteine 142 are joined by a disulfide. Residues 165–180 are compositionally biased toward pro residues; it reads PAPPRAPRPRGQPPGE. The disordered stretch occupies residues 165–220; it reads PAPPRAPRPRGQPPGEEPGRGPTLLFLIILPGTGSGTPREAEPHQPHAGGCPARQS.

This is V-set and transmembrane domain-containing protein 2-like protein (Vstm2l) from Mus musculus (Mouse).